The following is a 72-amino-acid chain: Translation initiation factor IF-1 (72 aa).

The S1-like domain maps to 1-72; sequence MAKEGAIEVE…TRGRIVYRYK (72 aa).

It belongs to the IF-1 family. In terms of assembly, component of the 30S ribosomal translation pre-initiation complex which assembles on the 30S ribosome in the order IF-2 and IF-3, IF-1 and N-formylmethionyl-tRNA(fMet); mRNA recruitment can occur at any time during PIC assembly.

It localises to the cytoplasm. In terms of biological role, one of the essential components for the initiation of protein synthesis. Stabilizes the binding of IF-2 and IF-3 on the 30S subunit to which N-formylmethionyl-tRNA(fMet) subsequently binds. Helps modulate mRNA selection, yielding the 30S pre-initiation complex (PIC). Upon addition of the 50S ribosomal subunit IF-1, IF-2 and IF-3 are released leaving the mature 70S translation initiation complex. This is Translation initiation factor IF-1 from Corynebacterium diphtheriae (strain ATCC 700971 / NCTC 13129 / Biotype gravis).